A 701-amino-acid chain; its full sequence is Elongation factor G (701 aa).

The tr-type G domain occupies 8-290; it reads ARYRNIGISA…AVIEYLPAPT (283 aa). Residues 17–24, 88–92, and 142–145 each bind GTP; these read AHIDAGKT, DTPGH, and NKMD.

This sequence belongs to the TRAFAC class translation factor GTPase superfamily. Classic translation factor GTPase family. EF-G/EF-2 subfamily.

Its subcellular location is the cytoplasm. Catalyzes the GTP-dependent ribosomal translocation step during translation elongation. During this step, the ribosome changes from the pre-translocational (PRE) to the post-translocational (POST) state as the newly formed A-site-bound peptidyl-tRNA and P-site-bound deacylated tRNA move to the P and E sites, respectively. Catalyzes the coordinated movement of the two tRNA molecules, the mRNA and conformational changes in the ribosome. The protein is Elongation factor G of Sodalis glossinidius (strain morsitans).